Here is a 134-residue protein sequence, read N- to C-terminus: Small ribosomal subunit protein uS8c (134 aa).

This sequence belongs to the universal ribosomal protein uS8 family. Part of the 30S ribosomal subunit.

It localises to the plastid. The protein localises to the chloroplast. One of the primary rRNA binding proteins, it binds directly to 16S rRNA central domain where it helps coordinate assembly of the platform of the 30S subunit. The polypeptide is Small ribosomal subunit protein uS8c (rps8) (Arabidopsis thaliana (Mouse-ear cress)).